The following is a 293-amino-acid chain: MGLVKVIKNKAYFKRYQVKLRRRREGKTDYYARKRLTVQDKNKYNTPKYRLIVRITNKDVVAQLAYSKIEGDVVVASAYSHELPRYGLKVGLTNYAAAYATGLLLARRHLKTIGLDSTYKGHEELTGEDYNVEEEGDRAPFKAVLDIGLARTTTGSKIFAVMKGVADGGINVPHSESRFFGFDQESKEYNAEAHRDRILGKHVADYMTYLKEEDEDRYKRQFSKFLAAGLNADNLVATYQKVHSAIRADASPAAKKAAKPSKRHTAKRLTYDERKQRVADKKALLLQLKEQQE.

The segment at Asp249–Glu273 is disordered. The segment covering Lys256–Lys267 has biased composition (basic residues).

It belongs to the universal ribosomal protein uL18 family. As to quaternary structure, component of the large ribosomal subunit (LSU).

Its subcellular location is the cytoplasm. The protein localises to the nucleus. Component of the ribosome, a large ribonucleoprotein complex responsible for the synthesis of proteins in the cell. The small ribosomal subunit (SSU) binds messenger RNAs (mRNAs) and translates the encoded message by selecting cognate aminoacyl-transfer RNA (tRNA) molecules. The large subunit (LSU) contains the ribosomal catalytic site termed the peptidyl transferase center (PTC), which catalyzes the formation of peptide bonds, thereby polymerizing the amino acids delivered by tRNAs into a polypeptide chain. The nascent polypeptides leave the ribosome through a tunnel in the LSU and interact with protein factors that function in enzymatic processing, targeting, and the membrane insertion of nascent chains at the exit of the ribosomal tunnel. This is Large ribosomal subunit protein uL18 (rpl-5) from Caenorhabditis elegans.